Consider the following 584-residue polypeptide: High-affinity choline transporter 1 (584 aa).

The Extracellular portion of the chain corresponds to 1-6 (MTVHID). A helical membrane pass occupies residues 7–27 (GIVAIVLFYLLILFVGLWAAW). The Cytoplasmic segment spans residues 28–50 (KSKNTSMEGAMDRSEAIMIGGRD). A helical membrane pass occupies residues 51-71 (IGLLVGGFTMTATWVGGGYIN). Residues 72 to 83 (GTAEAVYVPGYG) lie on the Extracellular side of the membrane. A helical membrane pass occupies residues 84 to 104 (LAWAQAPFGYALSLVIGGLFF). Residues 105-127 (AKPMRSRGYVTMLDPFQQMYGKR) lie on the Cytoplasmic side of the membrane. A helical transmembrane segment spans residues 128 to 148 (MGGLLFIPALLGEIFWSAAIL). Over 149–166 (SALGATLSVIVDININVS) the chain is Extracellular. The chain crosses the membrane as a helical span at residues 167–187 (VVVSAVIAVLYTLVGGLYSVA). Residues 188 to 193 (YTDVVQ) are Cytoplasmic-facing. The chain crosses the membrane as a helical span at residues 194–214 (LFCIFLGLWISIPFALLNPAV). Over 215–239 (TDIIVTANQEVYQEPWVGNIQSKDS) the chain is Extracellular. A helical transmembrane segment spans residues 240–260 (LIWIDNFLLLMLGGIPWQVYF). Residues 261-276 (QRVLSASSATYAQVLS) are Cytoplasmic-facing. Residues 277–297 (FLAAFGCVLMAIPSVLIGAIG) form a helical membrane-spanning segment. The Extracellular segment spans residues 298–319 (TSTDWNQTSYGLPGPIGKNETD). Asparagine 303 carries N-linked (GlcNAc...) asparagine glycosylation. Residues 320-340 (MILPIVLQHLCPPYISFFGLG) traverse the membrane as a helical segment. Residues 341-378 (AVSAAVMSSADSSILSASSMFARNIYHLAFRQEASDKE) are Cytoplasmic-facing. A helical transmembrane segment spans residues 379 to 399 (IVWVMRITIFLFGGAATSMAL). The Extracellular segment spans residues 400–408 (LAQSIYGLW). A helical transmembrane segment spans residues 409-429 (YLSSDLVYVIIFPQLISVLFV). Topologically, residues 430–437 (KGTNTYGS) are cytoplasmic. Residues 438-458 (IAGYIIGFLLRISGGEPYLHM) form a helical membrane-spanning segment. The Extracellular segment spans residues 459-487 (QPFIYYPGCYLDHSFGDDPVYVQRFPFKT). A helical membrane pass occupies residues 488-508 (MAMLFSFLGNTGVSYLVKYLF). Over 509-584 (VSGILPPKLD…NPELSKSGND (76 aa)) the chain is Cytoplasmic.

Belongs to the sodium:solute symporter (SSF) (TC 2.A.21) family. Post-translationally, phosphorylated. In terms of tissue distribution, specific for cholinergic neurons.

It is found in the membrane. Its function is as follows. Imports choline from the extracellular space to the neuron with high affinity. Rate-limiting step in acetylcholine synthesis. Sodium ion and chloride ion dependent. The polypeptide is High-affinity choline transporter 1 (CHT1) (Torpedo marmorata (Marbled electric ray)).